The primary structure comprises 210 residues: Small ribosomal subunit protein uS3 (210 aa).

Residues 38–106 (IRQFLKKRLY…EVFININEVR (69 aa)) form the KH type-2 domain.

The protein belongs to the universal ribosomal protein uS3 family. Part of the 30S ribosomal subunit. Forms a tight complex with proteins S10 and S14.

Its function is as follows. Binds the lower part of the 30S subunit head. Binds mRNA in the 70S ribosome, positioning it for translation. In Trichlorobacter lovleyi (strain ATCC BAA-1151 / DSM 17278 / SZ) (Geobacter lovleyi), this protein is Small ribosomal subunit protein uS3.